The following is a 601-amino-acid chain: Glutamine--fructose-6-phosphate aminotransferase [isomerizing] (601 aa).

Catalysis depends on C2, which acts as the Nucleophile; for GATase activity. In terms of domain architecture, Glutamine amidotransferase type-2 spans 2–218 (CGIVGYIGYD…DHEIVIVKKD (217 aa)). 2 consecutive SIS domains span residues 284–423 (IIND…EHGR) and 453–591 (IATD…VDKP). The active-site For Fru-6P isomerization activity is K596.

Homodimer.

The protein resides in the cytoplasm. The catalysed reaction is D-fructose 6-phosphate + L-glutamine = D-glucosamine 6-phosphate + L-glutamate. Its function is as follows. Catalyzes the first step in hexosamine metabolism, converting fructose-6P into glucosamine-6P using glutamine as a nitrogen source. The protein is Glutamine--fructose-6-phosphate aminotransferase [isomerizing] of Staphylococcus aureus (strain COL).